The chain runs to 315 residues: L-lactate dehydrogenase (315 aa).

Positions 14, 35, and 66 each coordinate NAD(+). Substrate contacts are provided by residues Q83, R89, and 121 to 124 (NPVD). NAD(+) contacts are provided by residues 119-121 (VAN) and S144. 149–152 (DTAR) contacts substrate. Residue H176 is the Proton acceptor of the active site. Y221 carries the phosphotyrosine modification. T230 is a substrate binding site.

The protein belongs to the LDH/MDH superfamily. LDH family. Homotetramer.

The protein localises to the cytoplasm. It carries out the reaction (S)-lactate + NAD(+) = pyruvate + NADH + H(+). It participates in fermentation; pyruvate fermentation to lactate; (S)-lactate from pyruvate: step 1/1. Catalyzes the conversion of lactate to pyruvate. This Mesomycoplasma hyopneumoniae (strain 232) (Mycoplasma hyopneumoniae) protein is L-lactate dehydrogenase.